We begin with the raw amino-acid sequence, 112 residues long: UPF0145 protein LAF_1635 (112 aa).

This sequence belongs to the UPF0145 family.

This chain is UPF0145 protein LAF_1635, found in Limosilactobacillus fermentum (strain NBRC 3956 / LMG 18251) (Lactobacillus fermentum).